Reading from the N-terminus, the 276-residue chain is Large ribosomal subunit protein uL2c (276 aa).

The segment at R221–K276 is disordered. Residues K258 to K276 are compositionally biased toward basic residues.

This sequence belongs to the universal ribosomal protein uL2 family. As to quaternary structure, part of the 50S ribosomal subunit.

The protein resides in the plastid. It localises to the chloroplast. The chain is Large ribosomal subunit protein uL2c (rpl2) from Stigeoclonium helveticum (Green alga).